Consider the following 753-residue polypeptide: MGKAQSKRSIDITTDPKKVGEGDEVAGKVEKIDVDQKTDAPAVNGDAATPKEGGDEAAAVEKKETEEHSENDKDLTTEKSAAVAEGGDAVAETAKGEEGSPKEAAAGEDITPLADESIKSKSKKDKVKKKWSFRSISFGKKDKQKPAKSEEATSPTSGTTSPTTAEAEAAPAGDAAVAEPSVATNGEAEKPAETATATSEPASKDEKPAENGSATEQEKQANGETEKAAPAPSTVEEAAKPKPAEEPATVTATESNTTATEEVPVKESQPEPEVVTNGHGAGEALTNGSSNGLAESPVTETAPVADNIPSNVDDEPPHQNGTNGTTTPPPTPVATEIEKGQQIEASSEVIETVTPSQAEEEVVAAIIKAVSSEPEAETETETEAEGFVLVAPVSTEVEVPVSISPIEPVAEVSQVKIEPLVEIPEVEAKSVADVSEADTESVPKVSELKTEVSEIEFESVIVETRSSSPPPPLPKSPPPSRVSAFVLSEDVIEEQVTPNVPEVNDVKPDEIEQQAISIVAEITEQAAEIVTEQEKQQEEAKVDSVPETIEESSSTVVVEEVLPVQNDEVTAPSPTPDDVQKPIEDQDTPDEKESYPVPDPIDPAAVNDEVAVTEAVDCEVEKETGSISSNVAESSSVSDEQAAIENQVEILEEQTVAVEETTEQETSDQQVISEEAHSDNDKENEIDLVENIISDLDAPITKAGGDLLVELDARSAEQEGESNNKVDLAKDLKEKNAAAADVTTQEQLPVTCE.

5 disordered regions span residues 1–345 (MGKA…QIEA), 462–482 (VETR…PSRV), 531–604 (TEQE…IDPA), 620–641 (VEKE…SDEQ), and 658–684 (VEET…DKEN). Glycine 2 is lipidated: N-myristoyl glycine. 2 stretches are compositionally biased toward basic and acidic residues: residues 8–38 (RSID…DQKT) and 59–77 (AVEK…DLTT). Over residues 81 to 93 (AAVAEGGDAVAET) the composition is skewed to low complexity. The F-actin binding stretch occupies residues 119-148 (KSKSKKDKVKKKWSFRSISFGKKDKQKPAK). Residues 120-132 (SKSKKDKVKKKWS) are compositionally biased toward basic residues. 3 positions are modified to phosphoserine: serine 132, serine 135, and serine 137. Residues 139–151 (GKKDKQKPAKSEE) show a composition bias toward basic and acidic residues. Positions 152 to 181 (ATSPTSGTTSPTTAEAEAAPAGDAAVAEPS) are enriched in low complexity. Over residues 216–227 (EQEKQANGETEK) the composition is skewed to basic and acidic residues. Over residues 246 to 262 (EPATVTATESNTTATEE) the composition is skewed to low complexity. The segment at 345 to 725 (ASSEVIETVT…AEQEGESNNK (381 aa)) is interaction with PKA-R2. Residues 468-480 (SPPPPLPKSPPPS) are compositionally biased toward pro residues. Residues 532–544 (EQEKQQEEAKVDS) show a composition bias toward basic and acidic residues. Positions 545–561 (VPETIEESSSTVVVEEV) are enriched in low complexity. Over residues 578-594 (DVQKPIEDQDTPDEKES) the composition is skewed to basic and acidic residues. Over residues 626–638 (SISSNVAESSSVS) the composition is skewed to low complexity. The segment covering 674–684 (EEAHSDNDKEN) has biased composition (basic and acidic residues).

As to quaternary structure, homodimer. Interacts with Cam; interaction is calcium-dependent and is inhibited by PKC-mediated phosphorylation of Akap200. Interacts with N/Notch; the interaction stabilizes N/Notch protein levels by preventing Cbl-mediated ubiquitination and subsequent lysosomal degradation of N/Notch. Interacts with Pka-R2. Binds to F-actin; interaction is independent of myristoylation, but is inhibited by Akap200 phosphorylation and Cam binding. Isoform B: Does not bind to Pka-R2. Post-translationally, myristoylated; myristoylation promotes accumulation at the cell periphery. Phosphorylated; phosphorylation prevents binding to F-actin and Cam. Detected in the brain in both neurons and glia (including perineurial glia); specifically in the neuronal nuclei in the cortex and synaptic neuropil (at protein level). Detected in germline cells, somatic follicle cells and outer rim of the ring canals during oogenesis (at protein level). Isoform A: Detected in the adult (at protein level). Isoform B: Detected in the adult with higher levels in the head (at protein level).

It is found in the cytoplasm. Its subcellular location is the cytosol. The protein resides in the cell membrane. It localises to the cytoskeleton. In terms of biological role, scaffolding protein involved in the regulation of PKA signaling and anchoring to the actin cytoskeleton integrating signals propagated by cAMP, diacylglycerol and calcium. Contributes to the maintenance and regulation of cytoskeletal structures in germline via PKA-mediated signaling. As part of ethanol response in the glia, mediates ethanol-induced structural remodeling of actin cytoskeleton and perineurial membrane topology by anchoring PKA to the membrane of perineurial glia. In specific tissues such as eye and thorax, promotes N/Notch protein stability by inhibiting Cbl-mediated ubiquitination and lysosomal degradation pathway of N/Notch in a PKA-independent way. In the circadian brain neurons evening cells (E-cells), might have a role in circadian pacemaker synchronization by playing a redundant role in signaling downstream of the G protein-couple receptor Pdfr. The protein is A-kinase anchor protein 200 of Drosophila melanogaster (Fruit fly).